We begin with the raw amino-acid sequence, 262 residues long: Phosphonates import ATP-binding protein PhnC (262 aa).

The ABC transporter domain occupies 5-253 (IRVEKLAKTF…RFDHLYRSIN (249 aa)). 37–44 (GPSGSGKS) contributes to the ATP binding site.

This sequence belongs to the ABC transporter superfamily. Phosphonates importer (TC 3.A.1.9.1) family. In terms of assembly, the complex is composed of two ATP-binding proteins (PhnC), two transmembrane proteins (PhnE) and a solute-binding protein (PhnD).

The protein resides in the cell inner membrane. The catalysed reaction is phosphonate(out) + ATP + H2O = phosphonate(in) + ADP + phosphate + H(+). Functionally, part of the ABC transporter complex PhnCDE involved in phosphonates import. Responsible for energy coupling to the transport system. This chain is Phosphonates import ATP-binding protein PhnC, found in Shigella sonnei (strain Ss046).